Reading from the N-terminus, the 276-residue chain is Triple specificity protein phosphatase PtpB (276 aa).

Cysteine 160 serves as the catalytic Phosphocysteine intermediate. The UIM-like region stretch occupies residues leucine 232 to tyrosine 250.

It belongs to the protein-tyrosine phosphatase family. In terms of assembly, interacts (via UIM-like region) with host ubiquitin; activating the phosphatidylinositol phosphate phosphatase activity.

It is found in the secreted. Its subcellular location is the host cytoplasm. The protein localises to the host cell membrane. It catalyses the reaction O-phospho-L-tyrosyl-[protein] + H2O = L-tyrosyl-[protein] + phosphate. The enzyme catalyses O-phospho-L-seryl-[protein] + H2O = L-seryl-[protein] + phosphate. The catalysed reaction is O-phospho-L-threonyl-[protein] + H2O = L-threonyl-[protein] + phosphate. It carries out the reaction 1,2-dioctanoyl-sn-glycero-3-phospho-(1-D-myo-inositol-3-phosphate) + H2O = 1,2-dioctanoyl-sn-glycero-3-phospho-(1D-myo-inositol) + phosphate. It catalyses the reaction 1,2-dioctanoyl-sn-glycero-3-phospho-(1-D-myo-inositol-4-phosphate) + H2O = 1,2-dioctanoyl-sn-glycero-3-phospho-(1D-myo-inositol) + phosphate. The enzyme catalyses 1,2-dioctanoyl-sn-glycero-3-phospho-(1D-myo-inositol-5-phosphate) + H2O = 1,2-dioctanoyl-sn-glycero-3-phospho-(1D-myo-inositol) + phosphate. Binding to host ubiquitin is required to activate the phosphatidylinositol phosphate phosphatase activity. Phosphatase activity is inhibited by sodium orthovanadate, a specific inhibitor of tyrosine phosphatases, but not by okadaic acid, an inhibitor of serine/threonine phosphatases. Inhibition of the enzyme reduces mycobacterial survival in infected macrophages. Inhibitors also enhance killing efficacy by first-line antibiotics. Essential virulence factor that promotes mycobacterial survival within host macrophages. Acts as a phosphatase that possesses triple substrate specificity toward phosphotyrosine, phosphoserine/threonine and phosphoinositides. Supports mycobacteria survival during infection by modulating the normal host signaling pathways, attenuating the bactericidal immune responses and promoting the host cell survival. Inhibits host pyroptosis by disrupting the membrane localization of host gasdermin-D (GSDMD): acts by catalyzing dephosphorylation of phosphatidylinositol (4,5)-bisphosphate and phosphatidylinositol 4-phosphate, thereby inhibiting the membrane targeting of GSDMD and subsequent cytokine release and pyroptosis. Inhibits host inflammatory responses and apoptosis through impeding the NF-kappa-B and MAPK signal pathways and TP53/p53 expression in the macrophage. Blocks the IL6/IL-6 production by down-regulating ERK1/2, p38 and p65 activity. Prevents macrophage cell death by activating the Akt pathway and blocking caspase 3 activity. Reduces the expression of iNOS in activated macrophages and inhibits the generation of destroying reactive nitrogen intermediate NO. In Mycobacterium tuberculosis (strain ATCC 25618 / H37Rv), this protein is Triple specificity protein phosphatase PtpB.